The sequence spans 207 residues: Large ribosomal subunit protein uL4 (207 aa).

The disordered stretch occupies residues 49–79; it reads HKVKSRGEVSGGGKKPWRQKGTGRARAGTSR.

Belongs to the universal ribosomal protein uL4 family. In terms of assembly, part of the 50S ribosomal subunit.

Its function is as follows. One of the primary rRNA binding proteins, this protein initially binds near the 5'-end of the 23S rRNA. It is important during the early stages of 50S assembly. It makes multiple contacts with different domains of the 23S rRNA in the assembled 50S subunit and ribosome. Forms part of the polypeptide exit tunnel. The sequence is that of Large ribosomal subunit protein uL4 from Heliobacterium modesticaldum (strain ATCC 51547 / Ice1).